Here is a 133-residue protein sequence, read N- to C-terminus: MADAFVGTWKLVDSKNFDDYMKSLGVGFATRQVASMTKPTTIIEKNGDTITIKTHSTFKNTEISFQLGVEFDEVTADDRKVKSVVTLDGGKLVHVQKWDGQETTLTRELSDGKLILTLTHGNVVSTRTYEKEA.

Ala2 bears the N-acetylalanine mark. A Phosphothreonine modification is found at Thr8. A Phosphotyrosine; by Tyr-kinases modification is found at Tyr20. At Ser23 the chain carries Phosphoserine. Thr30 carries the phosphothreonine modification. Phosphoserine is present on Ser83. Residue 127-129 coordinates (9Z)-octadecenoate; sequence RTY. 127–129 provides a ligand contact to hexadecanoate; sequence RTY. An octadecanoate-binding site is contributed by 127 to 129; it reads RTY.

In terms of tissue distribution, heart, but also skeletal muscle, kidney, brain and mammary gland.

The protein resides in the cytoplasm. Its function is as follows. FABPs are thought to play a role in the intracellular transport of long-chain fatty acids and their acyl-CoA esters. This chain is Fatty acid-binding protein, heart (Fabp3), found in Rattus norvegicus (Rat).